The sequence spans 496 residues: UDP-glycosyltransferase 73C2 (496 aa).

UDP-alpha-D-glucose is bound by residues serine 297, 357–359 (SPQ), 374–382 (HCGWNSTLE), and 396–399 (FGDQ).

It belongs to the UDP-glycosyltransferase family.

The chain is UDP-glycosyltransferase 73C2 (UGT73C2) from Arabidopsis thaliana (Mouse-ear cress).